Reading from the N-terminus, the 508-residue chain is Anthranilate synthase component 1 (508 aa).

L-tryptophan is bound by residues serine 51 and 283-285 (PYM). Chorismate is bound at residue 323–324 (GT). Glutamate 350 lines the Mg(2+) pocket. Residues tyrosine 438, arginine 458, 477-479 (GAG), and glycine 479 each bind chorismate. Glutamate 492 serves as a coordination point for Mg(2+).

Belongs to the anthranilate synthase component I family. In terms of assembly, heterotetramer consisting of two non-identical subunits: a beta subunit (TrpG) and a large alpha subunit (TrpE). Mg(2+) is required as a cofactor.

The catalysed reaction is chorismate + L-glutamine = anthranilate + pyruvate + L-glutamate + H(+). It functions in the pathway amino-acid biosynthesis; L-tryptophan biosynthesis; L-tryptophan from chorismate: step 1/5. Its activity is regulated as follows. Feedback inhibited by tryptophan. In terms of biological role, part of a heterotetrameric complex that catalyzes the two-step biosynthesis of anthranilate, an intermediate in the biosynthesis of L-tryptophan. In the first step, the glutamine-binding beta subunit (TrpG) of anthranilate synthase (AS) provides the glutamine amidotransferase activity which generates ammonia as a substrate that, along with chorismate, is used in the second step, catalyzed by the large alpha subunit of AS (TrpE) to produce anthranilate. In the absence of TrpG, TrpE can synthesize anthranilate directly from chorismate and high concentrations of ammonia. The sequence is that of Anthranilate synthase component 1 (trpE) from Synechocystis sp. (strain ATCC 27184 / PCC 6803 / Kazusa).